We begin with the raw amino-acid sequence, 836 residues long: Ethylene receptor 3 (836 aa).

3 helical membrane-spanning segments follow: residues 137–157, 166–186, and 204–224; these read LIAA…AGLR, LVQF…TAFT, and LTAL…PQLL. 2 residues coordinate Cu cation: Cys-176 and His-180. A GAF domain is found at 269–413; the sequence is DRHTVLYTTL…VVAGQVAVAL (145 aa). The stretch at 416–452 forms a coiled coil; it reads ATLLEESRAMRDRLAEQNRELLQARRDALMANEARQA. The 235-residue stretch at 457 to 691 folds into the Histidine kinase domain; the sequence is MSQGMRRPIH…LVLRFQLQSP (235 aa). Positions 718–834 constitute a Response regulatory domain; that stretch reads LLIDDDDDIN…LKDELARILQ (117 aa).

This sequence belongs to the ethylene receptor family. The cofactor is Cu cation.

It is found in the endoplasmic reticulum membrane. The enzyme catalyses ATP + protein L-histidine = ADP + protein N-phospho-L-histidine.. In terms of biological role, ethylene receptor related to bacterial two-component regulators. Acts as a negative regulator of ethylene signaling. May delay the transition from the vegetative stage to the floral stage by up-regulating GI (GIGANTEA) and RCN1 and cause starch accumulation in stems by down-regulating the alpha-amylase AMY3D. The polypeptide is Ethylene receptor 3 (Oryza sativa subsp. indica (Rice)).